Consider the following 802-residue polypeptide: Leucine--tRNA ligase (802 aa).

A 'HIGH' region motif is present at residues 41 to 52 (PYPSGQGLHVGH). The 'KMSKS' region signature appears at 580 to 584 (KMSKS). Residue K583 coordinates ATP.

It belongs to the class-I aminoacyl-tRNA synthetase family.

It is found in the cytoplasm. The catalysed reaction is tRNA(Leu) + L-leucine + ATP = L-leucyl-tRNA(Leu) + AMP + diphosphate. The chain is Leucine--tRNA ligase from Alkaliphilus oremlandii (strain OhILAs) (Clostridium oremlandii (strain OhILAs)).